Consider the following 452-residue polypeptide: UPF0210 protein Cthe_0410 (452 aa).

Belongs to the UPF0210 family. Homodimer.

This Acetivibrio thermocellus (strain ATCC 27405 / DSM 1237 / JCM 9322 / NBRC 103400 / NCIMB 10682 / NRRL B-4536 / VPI 7372) (Clostridium thermocellum) protein is UPF0210 protein Cthe_0410.